Reading from the N-terminus, the 275-residue chain is Large ribosomal subunit protein uL2 (275 aa).

Residues 223–275 (GVVMNPVDHPHGGGEGRGKGHHPQSPWGVPAKGYKTRRGKRASDKFIVRRRNG) form a disordered region. Positions 230-240 (DHPHGGGEGRG) are enriched in basic and acidic residues.

This sequence belongs to the universal ribosomal protein uL2 family. In terms of assembly, part of the 50S ribosomal subunit. Forms a bridge to the 30S subunit in the 70S ribosome.

In terms of biological role, one of the primary rRNA binding proteins. Required for association of the 30S and 50S subunits to form the 70S ribosome, for tRNA binding and peptide bond formation. It has been suggested to have peptidyltransferase activity; this is somewhat controversial. Makes several contacts with the 16S rRNA in the 70S ribosome. The polypeptide is Large ribosomal subunit protein uL2 (Fervidobacterium nodosum (strain ATCC 35602 / DSM 5306 / Rt17-B1)).